Consider the following 256-residue polypeptide: NH(3)-dependent NAD(+) synthetase (256 aa).

Position 29–36 (29–36) interacts with ATP; sequence GISGGIDS. Mg(2+) is bound at residue Asp35. Deamido-NAD(+) is bound at residue Arg115. An ATP-binding site is contributed by Thr135. A Mg(2+)-binding site is contributed by Glu140. 2 residues coordinate deamido-NAD(+): Lys148 and Asp155. ATP contacts are provided by Lys164 and Ser186. 245-246 provides a ligand contact to deamido-NAD(+); the sequence is HK.

This sequence belongs to the NAD synthetase family. In terms of assembly, homodimer.

The catalysed reaction is deamido-NAD(+) + NH4(+) + ATP = AMP + diphosphate + NAD(+) + H(+). It functions in the pathway cofactor biosynthesis; NAD(+) biosynthesis; NAD(+) from deamido-NAD(+) (ammonia route): step 1/1. In terms of biological role, catalyzes the ATP-dependent amidation of deamido-NAD to form NAD. Uses ammonia as a nitrogen source. This Methanosarcina acetivorans (strain ATCC 35395 / DSM 2834 / JCM 12185 / C2A) protein is NH(3)-dependent NAD(+) synthetase.